The chain runs to 185 residues: UPF0149 protein PD_0802 (185 aa).

This sequence belongs to the UPF0149 family.

The polypeptide is UPF0149 protein PD_0802 (Xylella fastidiosa (strain Temecula1 / ATCC 700964)).